The sequence spans 661 residues: Kyphoscoliosis peptidase (661 aa).

The span at 28–41 shows a compositional bias: polar residues; sequence GTLSDQQANPSSLL. 2 disordered regions span residues 28 to 47 and 115 to 136; these read GTLSDQQANPSSLLQRGGGF and QGDKNGNTRPRQPGGKDAHAYP. Catalysis depends on residues cysteine 225, histidine 267, and aspartate 282.

The protein belongs to the transglutaminase-like superfamily. Interacts with IGFN1 and FLNC. In terms of tissue distribution, highly expressed in skeletal muscle.

Its subcellular location is the cytoplasm. It is found in the cytoskeleton. The protein resides in the myofibril. The protein localises to the sarcomere. It localises to the z line. Its function is as follows. Probable cytoskeleton-associated protease required for normal muscle growth. Involved in function, maturation and stabilization of the neuromuscular junction. May act by cleaving muscle-specific proteins such as FLNC. The sequence is that of Kyphoscoliosis peptidase from Homo sapiens (Human).